A 249-amino-acid polypeptide reads, in one-letter code: Vesicle-associated membrane protein-associated protein A (249 aa).

Ala2 carries the N-acetylalanine modification. Residues 2 to 227 are Cytoplasmic-facing; the sequence is ASASGAMAKH…ASFRDNVTSP (226 aa). In terms of domain architecture, MSP spans 14–131; it reads ILVLDPPTDL…MDSKLRCVFE (118 aa). The interval 50-53 is phosphorylated FFAT motif binding; sequence KVKT. Lys125 is subject to N6-acetyllysine. A compositionally biased stretch (basic and acidic residues) spans 135–144; it reads ENDKLNDMEP. The interval 135–167 is disordered; the sequence is ENDKLNDMEPSKAVPLNASKQDGPMPKPHSVSL. Residue Ser166 is modified to Phosphoserine. The stretch at 169–205 forms a coiled coil; the sequence is DTETRKLMEECKRLQGEMMKLSEENRHLRDEGLRLRK. Residue Thr170 is modified to Phosphothreonine. A phosphoserine mark is found at Ser214, Ser216, and Ser219. The helical; Anchor for type IV membrane protein transmembrane segment at 228–248 threads the bilayer; it reads LPSLLVVIAAIFIGFFLGKFI.

The protein belongs to the VAMP-associated protein (VAP) (TC 9.B.17) family. Homodimer; disulfide-linked. Heterodimer with VAPB. Interacts with VAMP1, VAMP2, STX1A, BET1, SEC22C and with the C-terminal domain of OCLN. Interacts (via MSP domain) with OSBPL1A (via FFAT motif). Interacts (via MSP domain) with ZFYVE27; may retain ZFYVE27 in the endoplasmic reticulum and regulate its function in cell projections formation. Interacts with OSBP. Interacts (via C-terminus) with RSAD2/viperin (via C-terminus). Interacts with IFITM3. Interacts with OSBPL3 (phosphorylated form). Interacts with KIF5A in a ZFYVE27-dependent manner. Interacts (via MSP domain) with STARD3 (via phosphorylated FFAT motif); this interaction recruits VAPA to the endosome. Interacts with STARD3NL (via FFAT motif). Interacts with CERT1. Interacts with PLEKHA3 and SACM1L to form a ternary complex. Interacts with VPS13A (via FFAT motif). Interacts with RB1CC1 (via phosphorylated FFAT motif), MIGA2 (via phosphorylated FFAT motif), RMDN3 (via phosphorylated FFAT motif), KCNB1 (via phosphorylated FFAT motif) and KCNB2 (via phosphorylated FFAT motif). Interacts (via MSP domain) with WDR44 (via FFAT-like motif); the interactions connect the endoplasmic reticulum (ER) with the endosomal tubule. As to quaternary structure, (Microbial infection) Interacts with HCV protein NS5A and NS5B. In terms of tissue distribution, ubiquitous.

It localises to the endoplasmic reticulum membrane. It is found in the cell membrane. The protein localises to the cell junction. The protein resides in the tight junction. Its subcellular location is the nucleus membrane. In terms of biological role, endoplasmic reticulum (ER)-anchored protein that mediates the formation of contact sites between the ER and endosomes via interaction with FFAT motif-containing proteins such as STARD3 or WDR44. STARD3-VAPA interaction enables cholesterol transfer from the ER to endosomes. Via interaction with WDR44 participates in neosynthesized protein export. In addition, recruited to the plasma membrane through OSBPL3 binding. The OSBPL3-VAPA complex stimulates RRAS signaling which in turn attenuates integrin beta-1 (ITGB1) activation at the cell surface. With OSBPL3, may regulate ER morphology. May play a role in vesicle trafficking. In Homo sapiens (Human), this protein is Vesicle-associated membrane protein-associated protein A.